Consider the following 802-residue polypeptide: MTTRGSRSEKVKRIFQQFDGNLDGGLSREEMSALVVAVNPRVKFSDEQISAILDEVFRTYAEFIDGDKGLTFDGLLRTYDDGAGDVDRDFDALGIEFNEETKGASEASSSSITDERAVEAQKQQRTAAWAVSPNHGIVFDETWKLVDDLEILVKRLKSKQEKDGKLKVDNNNVDAFSEAGWSRELGPSSDISDKRIYWEESSHDYGVFVKELGVLRSKADGARSREEAFDGHMAIGKVLYEHQLFKEALVSFKRACELQPTDVRPHFKAGNCLYVLGKYKESKDEFLLALEAAESGGNQWAYLLPQIYVNLGISLEGEGMVLSACEYYREAAILCPTHYRALKLLGSALFGVGEYRAAVKALEEAIYLKPDYADAHCDLASSLHAMGEDERAIEVFQRAIDLKPGHVDALYNLGGLYMDLGRFQRASEMYTRVLAVWPNHWRAQLNKAVSLLGAGETEEAKRALKEALKMTNRVELHDAVSHLKQLQKKKKVKKGNSANEEGPFIVVESSKFKTVGEKTTLRPDLAIALQVRAFQRVTRLWKCDVEALRREMRDNNVPVSYSGNGIPTKSIRRPNLEEILRRLLNVLKPETFQGAIKAINEKILSVLDDSGSGRVDLGMFYAVIAPLCGGHPDKRKRVAFDALLWKPVNEGSSQITKMEAVKYIKLLRAIYIPSQGMSEMLEVHGESDDTSTVTFNQFLEMYDDSEWGFGIMSTVFKLETRDRNRHGNQVCSVCRYPIIGSRFKEVKTGFSLCNQCYSEGKIPPTFKQQEEYKFREYASEVEAMKAKCVCFSMQSHKKTIAT.

The EF-hand 1 domain occupies 6-41 (SRSEKVKRIFQQFDGNLDGGLSREEMSALVVAVNPR). TPR repeat units lie at residues 229 to 262 (FDGH…QPTD), 264 to 296 (RPHF…AESG), 305 to 338 (PQIY…CPTH), 339 to 372 (YRAL…KPDY), 373 to 406 (ADAH…KPGH), 407 to 440 (VDAL…WPNH), and 442 to 474 (RAQL…TNRV). One can recognise an EF-hand 2 domain in the interval 595-630 (AIKAINEKILSVLDDSGSGRVDLGMFYAVIAPLCGG).

This is an uncharacterized protein from Arabidopsis thaliana (Mouse-ear cress).